A 197-amino-acid polypeptide reads, in one-letter code: Large ribosomal subunit protein uL10 (197 aa).

The tract at residues G162–N197 is disordered. Positions G163–N197 are enriched in low complexity.

This sequence belongs to the universal ribosomal protein uL10 family. As to quaternary structure, part of the ribosomal stalk of the 50S ribosomal subunit. The N-terminus interacts with L11 and the large rRNA to form the base of the stalk. The C-terminus forms an elongated spine to which L12 dimers bind in a sequential fashion forming a multimeric L10(L12)X complex.

Forms part of the ribosomal stalk, playing a central role in the interaction of the ribosome with GTP-bound translation factors. The protein is Large ribosomal subunit protein uL10 of Paenarthrobacter aurescens (strain TC1).